A 298-amino-acid polypeptide reads, in one-letter code: ADP/ATP translocase 1 (298 aa).

Topologically, residues 1–7 (MGDHAWS) are mitochondrial intermembrane. Gly2 carries the post-translational modification N-acetylglycine. A Solcar 1 repeat occupies 6-98 (WSFLKDFLAG…FAFKDKYKQL (93 aa)). A Phosphoserine modification is found at Ser7. A helical transmembrane segment spans residues 8 to 37 (FLKDFLAGGVAAAVSKTAVAPIERVKLLLQ). The Mitochondrial matrix segment spans residues 38-74 (VQHASKQISAEKQYKGIIDCVVRIPKEQGFLSFWRGN). At Lys52 the chain carries N6,N6,N6-trimethyllysine. A helical transmembrane segment spans residues 75–99 (LANVIRYFPTQALNFAFKDKYKQLF). 2 residues coordinate ADP: Arg80 and Lys92. Topologically, residues 100–109 (LGGVDRHKQF) are mitochondrial intermembrane. Residues 110–130 (WRYFAGNLASGGAAGATSLCF) traverse the membrane as a helical segment. 2 Solcar repeats span residues 111-201 (RYFA…AKGM) and 212-297 (VSWM…IKKY). The Mitochondrial matrix portion of the chain corresponds to 131–178 (VYPLDFARTRLAADVGKGAAQREFHGLGDCIIKIFKSDGLRGLYQGFN). Position 147 is an N6-succinyllysine (Lys147). Cys160 carries the post-translational modification S-nitrosocysteine. Residues 179-199 (VSVQGIIIYRAAYFGVYDTAK) traverse the membrane as a helical segment. The Mitochondrial intermembrane portion of the chain corresponds to 200–210 (GMLPDPKNVHI). The helical transmembrane segment at 211–231 (FVSWMIAQSVTAVAGLVSYPF) threads the bilayer. Topologically, residues 232-273 (DTVRRRMMMQSGRKGADIMYTGTVDCWRKIAKDEGAKAFFKG) are mitochondrial matrix. Residue Arg235 coordinates ADP. The important for transport activity stretch occupies residues 235–240 (RRRMMM). The Nucleotide carrier signature motif signature appears at 235–240 (RRRMMM). 2 positions are modified to N6-succinyllysine: Lys245 and Lys272. Residues 274 to 291 (AWSNVLRGMGGAFVLVLY) traverse the membrane as a helical segment. Over 292–298 (DEIKKYV) the chain is Mitochondrial intermembrane.

It belongs to the mitochondrial carrier (TC 2.A.29) family. As to quaternary structure, monomer. Found in a complex with ARL2, ARL2BP and SLC25A4/ANT1. Interacts with ARL2BP. Interacts with ARHGAP11B, thereby inhibiting the mitochondrial permeability transition pore (mPTP). Interacts with TIMM44; leading to inhibit the presequence translocase TIMM23, thereby promoting stabilization of PINK1. (Microbial infection) Interacts with HIV-1 Vpr. Under cell death induction, transglutaminated by TGM2. Transglutamination leads to formation of covalent cross-links between a glutamine and the epsilon-amino group of a lysine residue, forming polymers. As to expression, expressed in erythrocytes (at protein level).

The protein resides in the mitochondrion inner membrane. The protein localises to the membrane. It catalyses the reaction ADP(in) + ATP(out) = ADP(out) + ATP(in). It carries out the reaction H(+)(in) = H(+)(out). Its activity is regulated as follows. The matrix-open state (m-state) is inhibited by the membrane-permeable bongkrekic acid (BKA). The cytoplasmic-open state (c-state) is inhibited by the membrane-impermeable toxic inhibitor carboxyatractyloside (CATR). Proton transporter activity is inhibited by ADP:ATP antiporter activity. In terms of biological role, ADP:ATP antiporter that mediates import of ADP into the mitochondrial matrix for ATP synthesis, and export of ATP out to fuel the cell. Cycles between the cytoplasmic-open state (c-state) and the matrix-open state (m-state): operates by the alternating access mechanism with a single substrate-binding site intermittently exposed to either the cytosolic (c-state) or matrix (m-state) side of the inner mitochondrial membrane. In addition to its ADP:ATP antiporter activity, also involved in mitochondrial uncoupling and mitochondrial permeability transition pore (mPTP) activity. Plays a role in mitochondrial uncoupling by acting as a proton transporter: proton transport uncouples the proton flows via the electron transport chain and ATP synthase to reduce the efficiency of ATP production and cause mitochondrial thermogenesis. Proton transporter activity is inhibited by ADP:ATP antiporter activity, suggesting that SLC25A4/ANT1 acts as a master regulator of mitochondrial energy output by maintaining a delicate balance between ATP production (ADP:ATP antiporter activity) and thermogenesis (proton transporter activity). Proton transporter activity requires free fatty acids as cofactor, but does not transport it. Also plays a key role in mPTP opening, a non-specific pore that enables free passage of the mitochondrial membranes to solutes of up to 1.5 kDa, and which contributes to cell death. It is however unclear if SLC25A4/ANT1 constitutes a pore-forming component of mPTP or regulates it. Acts as a regulator of mitophagy independently of ADP:ATP antiporter activity: promotes mitophagy via interaction with TIMM44, leading to inhibit the presequence translocase TIMM23, thereby promoting stabilization of PINK1. This Homo sapiens (Human) protein is ADP/ATP translocase 1.